A 263-amino-acid polypeptide reads, in one-letter code: Protein PUN1 (263 aa).

The Cytoplasmic segment spans residues 1-6 (MRNFFT). A helical transmembrane segment spans residues 7 to 27 (LFFAAIFSLGALILAIVACAG). Over 28 to 143 (STKNYSPINK…MTYYNNLVKC (116 aa)) the chain is Extracellular. An N-linked (GlcNAc...) asparagine glycan is attached at asparagine 100. Residues 144–164 (MFITILIGIVLTFVNLVFNVL) form a helical membrane-spanning segment. The Cytoplasmic portion of the chain corresponds to 165 to 172 (RWIIHIRP). A helical membrane pass occupies residues 173 to 193 (LTWFGAFFSFFAFAALLVSIG). Residues 194-223 (SCLGTYSYIKYILKHNYSDYGISMSIGRNY) lie on the Extracellular side of the membrane. Asparagine 209 is a glycosylation site (N-linked (GlcNAc...) asparagine). The chain crosses the membrane as a helical span at residues 224 to 244 (QGLMWGAVVGALLNFILWCSV). Residues 245–263 (RSRPTVIYANAPIEEKPLI) are Cytoplasmic-facing. Lysine 260 participates in a covalent cross-link: Glycyl lysine isopeptide (Lys-Gly) (interchain with G-Cter in ubiquitin).

It belongs to the SUR7 family. Post-translationally, N-glycosylated.

The protein localises to the cell membrane. In terms of biological role, contributes to the wild-type cellular response to nitrogen stress through signaling pathways that regulate the expression of genes involved in amino acid biosynthesis. Required for wild-type filamentous growth, cell growth, and cell-cell adhesion. The chain is Protein PUN1 (PUN1) from Saccharomyces cerevisiae (strain ATCC 204508 / S288c) (Baker's yeast).